A 342-amino-acid chain; its full sequence is AA9 family lytic polysaccharide monooxygenase AA9-X282 (342 aa).

An N-terminal signal peptide occupies residues Met-1–Ala-18. His-17 is a binding site for Cu(2+). Phosphothreonine occurs at positions 19 and 57. Ser-59 bears the Phosphoserine mark. Cys-63 and Cys-181 form a disulfide bridge. A Cu(2+)-binding site is contributed by His-93. Positions 167 and 176 each coordinate O2. Position 178 (Tyr-178) interacts with Cu(2+). A glycan (N-linked (GlcNAc...) asparagine) is linked at Asn-189. The tract at residues Ser-233–Pro-263 is X282 extension. A disordered region spans residues Val-281–Pro-302. Over residues Pro-285–Pro-302 the composition is skewed to pro residues. A CBM1 domain is found at Pro-306–Leu-342.

This sequence belongs to the polysaccharide monooxygenase AA9 family. Cu(2+) serves as cofactor.

The protein localises to the secreted. The enzyme catalyses [(1-&gt;4)-beta-D-glucosyl]n+m + reduced acceptor + O2 = 4-dehydro-beta-D-glucosyl-[(1-&gt;4)-beta-D-glucosyl]n-1 + [(1-&gt;4)-beta-D-glucosyl]m + acceptor + H2O.. Functionally, lytic polysaccharide monooxygenase (LPMO) that depolymerizes crystalline and amorphous polysaccharides via the oxidation of scissile alpha- or beta-(1-4)-glycosidic bonds, yielding C1 oxidation products. Catalysis by LPMOs requires the reduction of the active-site copper from Cu(II) to Cu(I) by a reducing agent and H(2)O(2) or O(2) as a cosubstrate. Shows only weak binding properties to cellulose, and low cellulolytic oxidative activity which questions the involvement of X282 extension-containing AA9 proteins in the degradation of plant cell wall and opens new avenues as to the divergence of function of some AA9 members. The sequence is that of AA9 family lytic polysaccharide monooxygenase AA9-X282 from Coprinopsis cinerea (strain Okayama-7 / 130 / ATCC MYA-4618 / FGSC 9003) (Inky cap fungus).